The following is a 586-amino-acid chain: Phosphomethylpyrimidine synthase (586 aa).

Residues 1 to 59 are disordered; it reads MKQSVSAEQIELKSSLPGSKKVYVDGPREGMKVPMREIEQSDTNGVPNPPIRVYDTSGP. The segment covering 22–39 has biased composition (basic and acidic residues); the sequence is VYVDGPREGMKVPMREIE. Substrate-binding positions include Asn-193, Met-222, Tyr-251, His-287, 307–309, 348–351, and Glu-387; these read SRG and DGLR. Position 391 (His-391) interacts with Zn(2+). Tyr-414 contacts substrate. A Zn(2+)-binding site is contributed by His-455. [4Fe-4S] cluster contacts are provided by Cys-535, Cys-538, and Cys-543.

It belongs to the ThiC family. [4Fe-4S] cluster is required as a cofactor.

It carries out the reaction 5-amino-1-(5-phospho-beta-D-ribosyl)imidazole + S-adenosyl-L-methionine = 4-amino-2-methyl-5-(phosphooxymethyl)pyrimidine + CO + 5'-deoxyadenosine + formate + L-methionine + 3 H(+). It participates in cofactor biosynthesis; thiamine diphosphate biosynthesis. Catalyzes the synthesis of the hydroxymethylpyrimidine phosphate (HMP-P) moiety of thiamine from aminoimidazole ribotide (AIR) in a radical S-adenosyl-L-methionine (SAM)-dependent reaction. This chain is Phosphomethylpyrimidine synthase, found in Bacillus cereus (strain Q1).